The chain runs to 150 residues: uncharacterized protein (150 aa).

Residues 49–88 form a disordered region; sequence KEWAENASTDEIDDFLTHDDETERDADPSSGSGPELMNKA. Residues 63–75 are compositionally biased toward basic and acidic residues; sequence FLTHDDETERDAD.

This is an uncharacterized protein from Bacillus subtilis (strain 168).